We begin with the raw amino-acid sequence, 198 residues long: MRTFVLRARAAPTNSRALLEGVGNEAHTEILAHTLMNTMFVAQSHRQDVVVHLVLESTKDFSRTITIHSNEVSNVGGFHEANLLNIVVRALDASTGMGKEELRNVEPGVTVRTISFERLVQQLAENHQLYMLEKKGEFVRDIKFAANPCFLLTDHIPMPKKTFNSLKRLGTQNISLGPKMLFASQCVTLIQNELDLQE.

S-adenosyl-L-methionine is bound by residues leucine 132 and cysteine 186.

The protein belongs to the methyltransferase superfamily. TrmY family.

It localises to the cytoplasm. The chain is Putative pseudouridine methyltransferase from Vibrio vulnificus (strain CMCP6).